Consider the following 384-residue polypeptide: uncharacterized protein (384 aa).

Residues 137 to 303 (EHDAPNRLWQ…VPGSRYQPSA (167 aa)) form the Integrase catalytic domain.

This is an uncharacterized protein from Escherichia coli (strain K12).